The primary structure comprises 162 residues: Small ribosomal subunit protein uS9 (162 aa).

It belongs to the universal ribosomal protein uS9 family.

The polypeptide is Small ribosomal subunit protein uS9 (Methylobacterium nodulans (strain LMG 21967 / CNCM I-2342 / ORS 2060)).